Consider the following 583-residue polypeptide: Chloroplast sensor kinase, chloroplastic (583 aa).

A chloroplast-targeting transit peptide spans 1–50 (MSSIYLHGLSRRRRIGSVIVAIYMLDSCGAFLSASGSGRYPGFSYRGLSV). The GAF stretch occupies residues 97–277 (LFQELALSQL…SMDTERAALQ (181 aa)). Position 115 (Cys-115) interacts with [3Fe-4S] cluster. Residue His-292 is modified to Phosphohistidine; by autocatalysis. The segment at 412–442 (AASGSNGPSNSTTSFSGNGSDVSTYTEDDGA) is disordered. The segment covering 414–431 (SGSNGPSNSTTSFSGNGS) has biased composition (low complexity). The region spanning 447–583 (SSLFSEMDLE…ALDWTLRKHW (137 aa)) is the Histidine kinase domain.

It belongs to the chloroplast sensor kinase protein family. Oligomerizes. [3Fe-4S] cluster serves as cofactor. Autophosphorylates, possibly on His-292.

The protein localises to the plastid. The protein resides in the chloroplast stroma. It catalyses the reaction ATP + protein L-histidine = ADP + protein N-phospho-L-histidine.. Its function is as follows. Sensor kinase that senses the plastoquinone (PQ) redox state involved in stoichiometry adjustment of both photosystems (e.g. long-term adaptation via transcriptional regulation of reaction center genes of photosystems I and II) and state transitions (e.g. short-term adaptation involving reversible post-translational phosphorylation of light-harvesting complex II, LHC II), thus linking photosynthesis with gene expression in chloroplasts. Reduced PQ suppresses its autophosphorylation activity. The sequence is that of Chloroplast sensor kinase, chloroplastic from Phaeodactylum tricornutum (strain CCAP 1055/1).